Here is a 147-residue protein sequence, read N- to C-terminus: DNA-directed RNA polymerase RPB6 homolog (147 aa).

It belongs to the archaeal RpoK/eukaryotic RPB6 RNA polymerase subunit family. As to quaternary structure, part of the viral DNA-directed RNA polymerase that consists of 8 polII-like subunits (RPB1, RPB2, RPB3, RPB5, RPB6, RPB7, RPB9, RPB10), a capping enzyme and a termination factor.

The protein resides in the host cytoplasm. It is found in the virion. Component of the DNA-directed RNA polymerase (RNAP) that catalyzes the transcription in the cytoplasm of viral DNA into RNA using the four ribonucleoside triphosphates as substrates. The protein is DNA-directed RNA polymerase RPB6 homolog of Ornithodoros (relapsing fever ticks).